The chain runs to 238 residues: Ribonuclease PH (238 aa).

Residues Arg86 and Gly124 to Arg126 contribute to the phosphate site.

Belongs to the RNase PH family. In terms of assembly, homohexameric ring arranged as a trimer of dimers.

The enzyme catalyses tRNA(n+1) + phosphate = tRNA(n) + a ribonucleoside 5'-diphosphate. Functionally, phosphorolytic 3'-5' exoribonuclease that plays an important role in tRNA 3'-end maturation. Removes nucleotide residues following the 3'-CCA terminus of tRNAs; can also add nucleotides to the ends of RNA molecules by using nucleoside diphosphates as substrates, but this may not be physiologically important. Probably plays a role in initiation of 16S rRNA degradation (leading to ribosome degradation) during starvation. The chain is Ribonuclease PH from Halorhodospira halophila (strain DSM 244 / SL1) (Ectothiorhodospira halophila (strain DSM 244 / SL1)).